Consider the following 80-residue polypeptide: Large ribosomal subunit protein uL24 (80 aa).

Residues 53–80 (HMRPTQSNPQGSIIEREFPIHASNVKKS) are disordered.

Belongs to the universal ribosomal protein uL24 family. Part of the 50S ribosomal subunit.

Functionally, one of two assembly initiator proteins, it binds directly to the 5'-end of the 23S rRNA, where it nucleates assembly of the 50S subunit. In terms of biological role, one of the proteins that surrounds the polypeptide exit tunnel on the outside of the subunit. This Chlorobium luteolum (strain DSM 273 / BCRC 81028 / 2530) (Pelodictyon luteolum) protein is Large ribosomal subunit protein uL24.